Here is a 609-residue protein sequence, read N- to C-terminus: Chaperone protein DnaK (609 aa).

Thr173 carries the post-translational modification Phosphothreonine; by autocatalysis. Residues 580–609 (QAAQGGGAEGQEPKKDNVVDADYEVVDDKK) form a disordered region. The span at 598 to 609 (VDADYEVVDDKK) shows a compositional bias: acidic residues.

This sequence belongs to the heat shock protein 70 family.

In terms of biological role, acts as a chaperone. The chain is Chaperone protein DnaK from Brevibacillus brevis (strain 47 / JCM 6285 / NBRC 100599).